Reading from the N-terminus, the 120-residue chain is NAD(P)H-quinone oxidoreductase subunit 3, chloroplastic (120 aa).

A run of 3 helical transmembrane segments spans residues 9 to 29 (IFWA…LISG), 64 to 84 (MFAL…PWAM), and 88 to 108 (VLGV…IVGS).

The protein belongs to the complex I subunit 3 family. In terms of assembly, NDH is composed of at least 16 different subunits, 5 of which are encoded in the nucleus.

The protein localises to the plastid. Its subcellular location is the chloroplast thylakoid membrane. The enzyme catalyses a plastoquinone + NADH + (n+1) H(+)(in) = a plastoquinol + NAD(+) + n H(+)(out). It catalyses the reaction a plastoquinone + NADPH + (n+1) H(+)(in) = a plastoquinol + NADP(+) + n H(+)(out). In terms of biological role, NDH shuttles electrons from NAD(P)H:plastoquinone, via FMN and iron-sulfur (Fe-S) centers, to quinones in the photosynthetic chain and possibly in a chloroplast respiratory chain. The immediate electron acceptor for the enzyme in this species is believed to be plastoquinone. Couples the redox reaction to proton translocation, and thus conserves the redox energy in a proton gradient. This Liriodendron tulipifera (Tuliptree) protein is NAD(P)H-quinone oxidoreductase subunit 3, chloroplastic.